The chain runs to 162 residues: Malaria protein EXP-1 (162 aa).

The N-terminal stretch at 1 to 22 (MKILSVFFLVLFFIIFNKESLA) is a signal peptide. A helical transmembrane segment spans residues 80-101 (VLAGLLGVVSTVLLGGVGLVLY). The tract at residues 109–162 (PFKIGSSDPADNANPDADSESNGEPNADPQVTAQDVTPEQPQGDDNNLVSGPEH) is disordered. Positions 114–130 (SSDPADNANPDADSESN) are enriched in low complexity. Residues 120–137 (NANPDADSESNGEPNADP) form an epitope (deduced) region. A compositionally biased stretch (polar residues) spans 137 to 162 (PQVTAQDVTPEQPQGDDNNLVSGPEH).

Its subcellular location is the parasitophorous vacuole membrane. This chain is Malaria protein EXP-1 (EXP-1), found in Plasmodium falciparum.